A 387-amino-acid chain; its full sequence is Na(+)/H(+)-K(+) antiporter GerN (387 aa).

A run of 11 helical transmembrane segments spans residues 29–49, 54–74, 87–107, 114–134, 149–169, 175–195, 219–239, 263–283, 290–310, 324–344, and 347–367; these read PSVLGKLIVGIVIGPAVLGWI, LLTQLSNVGVILLMFMAGLET, LAVALGGIILPFVGGYVSGLV, NAVFLGLLLCATSVSISVQTL, LGAAVFDDILVVILLAFAMSF, VNLTMVILKKVVFFASIILIG, ALIICFSFAYFGELLGIAGII, PIAYAMFVPVFFVSIGMNITF, IWFILALTVIAVLTKLIGCGF, IIGAGMVSRGEVALIIAGTGL, and GLLAQDYFTAIVIVVILTTMI.

The protein belongs to the monovalent cation:proton antiporter 2 (CPA2) transporter (TC 2.A.37) family.

The protein resides in the membrane. Functionally, na(+)/H(+) antiporter that extrudes sodium in exchange for external protons. Can also use potassium as a coupling ion, without completely replacing H(+). This Na(+)/H(+)-K(+) antiport is much more rapid than Na(+)/H(+) antiport. Can also extrude lithium. Important for the inosine-dependent germination of spores. The chain is Na(+)/H(+)-K(+) antiporter GerN (gerN) from Bacillus cereus.